The primary structure comprises 527 residues: Calcium and calcium/calmodulin-dependent serine/threonine-protein kinase (527 aa).

Residues 12–314 (YEVSEILGRG…AQELLSDPWV (303 aa)) enclose the Protein kinase domain. Residue 18–26 (LGRGGFSVV) participates in ATP binding. The interval 25 to 51 (VVRKGTRKSNNDDEKSQSQSKSQSQSQ) is disordered. The segment covering 41–51 (QSQSKSQSQSQ) has biased composition (low complexity). Position 55 (K55) interacts with ATP. The interval 59–78 (RLGTSNNLPRKKDGGENSTE) is disordered. D179 (proton acceptor) is an active-site residue. Residues 239–255 (MWSLGVILYILLSGYPP) form a helical membrane-spanning segment. T279 carries the post-translational modification Phosphothreonine. The segment at 337–350 (ARRKLRAAAIASVW) is calmodulin-binding. Residues 358–379 (TKKLKSLVGSYDLKEDEIENLR) adopt a coiled-coil conformation. 3 consecutive EF-hand domains span residues 408–443 (SLIPFAARIFDLFDNNRDGTVDMREILCGFSSLKNS), 444–479 (KGEDALRLCFQMYDTDRSGCITKEEVASMLRALPYD), and 486–521 (TEPGKLDEIFDLMDANSDGKVTFDEFKAAMQRDSSL). Ca(2+) contacts are provided by D421, N423, D425, T427, E432, D457, D459, S461, C463, E468, D499, N501, D503, K505, and E510.

The protein belongs to the protein kinase superfamily. CAMK Ser/Thr protein kinase family. CaMK subfamily. In terms of processing, autophosphorylation.

It is found in the membrane. The enzyme catalyses L-seryl-[protein] + ATP = O-phospho-L-seryl-[protein] + ADP + H(+). It catalyses the reaction L-threonyl-[protein] + ATP = O-phospho-L-threonyl-[protein] + ADP + H(+). With respect to regulation, activated by calcium. Autophosphorylation may play an important role in the regulation of the kinase activity. Protein kinase that recognizes the calcium spiking induced by Nod factors and translates this signal to components controlling nodulation and mycorrhizal infection responses. This chain is Calcium and calcium/calmodulin-dependent serine/threonine-protein kinase (SYM9), found in Pisum sativum (Garden pea).